Consider the following 386-residue polypeptide: MNIHEHQAKQILKKYGAVVPEGVFAFTVDELIEKAKSLKTEKFVLKAQIHAGGRGKAGGVKILNTIDELSVAAKELLGKTLVTHQTGPAGREVKRLYVEESSNIDKEFYLSCLVDRASSKIVFISSDQGGMDIEEVAEKTPEKIITTKIDITDEISDADCEKIIAIYALADDAKKQAIALIKSVYKMFLGTDANMVEVNPLILTKEKKIICLDAKVNFDSNALFRHPEIIELRDLNEEDPTEIDASKHDLAYIKLDGSIGCMVNGAGLAMATMDIIKLYGEEPANFLDVGGGASKEKVSAALKIILSDKNVKGILINIFGGIMRCDVLAQGVVDAAKEINISVPLVVRLAGTNFKEGKEILDNSGLKLISAENLDDAAQKIVEAIK.

One can recognise an ATP-grasp domain in the interval 9 to 244 (KQILKKYGAV…LNEEDPTEID (236 aa)). Residues K46, 53 to 55 (GRG), E99, S102, and E107 contribute to the ATP site. 2 residues coordinate Mg(2+): N199 and D213. Residues N264 and 321–323 (GIM) contribute to the substrate site.

The protein belongs to the succinate/malate CoA ligase beta subunit family. As to quaternary structure, heterotetramer of two alpha and two beta subunits. It depends on Mg(2+) as a cofactor.

The catalysed reaction is succinate + ATP + CoA = succinyl-CoA + ADP + phosphate. It catalyses the reaction GTP + succinate + CoA = succinyl-CoA + GDP + phosphate. Its pathway is carbohydrate metabolism; tricarboxylic acid cycle; succinate from succinyl-CoA (ligase route): step 1/1. Its function is as follows. Succinyl-CoA synthetase functions in the citric acid cycle (TCA), coupling the hydrolysis of succinyl-CoA to the synthesis of either ATP or GTP and thus represents the only step of substrate-level phosphorylation in the TCA. The beta subunit provides nucleotide specificity of the enzyme and binds the substrate succinate, while the binding sites for coenzyme A and phosphate are found in the alpha subunit. The chain is Succinate--CoA ligase [ADP-forming] subunit beta from Pelagibacter ubique (strain HTCC1062).